The sequence spans 331 residues: ESX-3 secretion system protein EccE3 (331 aa).

2 consecutive transmembrane segments (helical) span residues 11–31 (GRVT…PWQS) and 37–57 (LLGV…GLYF).

It belongs to the EccE family. As to quaternary structure, part of the ESX-3 / type VII secretion system (T7SS), which is composed of cytosolic and membrane components. The ESX-3 membrane complex is composed of EccB3, EccC3, EccD3 and EccE3.

The protein resides in the cell inner membrane. Part of the ESX-3 specialized secretion system, which is important for iron and zinc uptake or homeostasis. The chain is ESX-3 secretion system protein EccE3 from Mycobacterium tuberculosis (strain CDC 1551 / Oshkosh).